Reading from the N-terminus, the 587-residue chain is 5-aminolevulinate synthase, erythroid-specific, mitochondrial (587 aa).

A mitochondrion-targeting transit peptide spans 1-49 (MVAAAMLLRSCPVLSQGPTGLLGKVAKTYQFLFSIGRCPILATQGPTCS). R163 contributes to the succinyl-CoA binding site. Pyridoxal 5'-phosphate is bound by residues C258 and F259. S280 and K299 together coordinate succinyl-CoA. Pyridoxal 5'-phosphate is bound by residues S332, H360, and T388. The active site involves K391. Position 391 is an N6-(pyridoxal phosphate)lysine (K391). Pyridoxal 5'-phosphate contacts are provided by T420 and T421. T508 is a binding site for succinyl-CoA.

This sequence belongs to the class-II pyridoxal-phosphate-dependent aminotransferase family. Homodimer. Interacts with SUCLA2. The cofactor is pyridoxal 5'-phosphate. Predomnantly expressed in erythroid cells.

The protein resides in the mitochondrion inner membrane. It is found in the mitochondrion. It catalyses the reaction succinyl-CoA + glycine + H(+) = 5-aminolevulinate + CO2 + CoA. It functions in the pathway porphyrin-containing compound metabolism; protoporphyrin-IX biosynthesis; 5-aminolevulinate from glycine: step 1/1. Its function is as follows. Catalyzes the pyridoxal 5'-phosphate (PLP)-dependent condensation of succinyl-CoA and glycine to form aminolevulinic acid (ALA), with CoA and CO2 as by-products. Contributes significantly to heme formation during erythropoiesis. The polypeptide is 5-aminolevulinate synthase, erythroid-specific, mitochondrial (Alas2) (Mus musculus (Mouse)).